The primary structure comprises 296 residues: Mycothiol acetyltransferase (296 aa).

N-acetyltransferase domains lie at 17–146 (YNHR…AVYD) and 156–296 (LKTA…VYEK). Residue Glu-44 coordinates 1D-myo-inositol 2-(L-cysteinylamino)-2-deoxy-alpha-D-glucopyranoside. 81 to 83 (LAV) is a binding site for acetyl-CoA. 1D-myo-inositol 2-(L-cysteinylamino)-2-deoxy-alpha-D-glucopyranoside contacts are provided by Glu-183, Lys-222, and Glu-230. Residues 234 to 236 (VGL) and 241 to 247 (RGKGLGD) each bind acetyl-CoA. Tyr-268 lines the 1D-myo-inositol 2-(L-cysteinylamino)-2-deoxy-alpha-D-glucopyranoside pocket.

This sequence belongs to the acetyltransferase family. MshD subfamily. Monomer.

The enzyme catalyses 1D-myo-inositol 2-(L-cysteinylamino)-2-deoxy-alpha-D-glucopyranoside + acetyl-CoA = mycothiol + CoA + H(+). Catalyzes the transfer of acetyl from acetyl-CoA to desacetylmycothiol (Cys-GlcN-Ins) to form mycothiol. The polypeptide is Mycothiol acetyltransferase (Corynebacterium efficiens (strain DSM 44549 / YS-314 / AJ 12310 / JCM 11189 / NBRC 100395)).